The chain runs to 441 residues: Platelet-activating factor acetylhydrolase (441 aa).

A signal peptide spans 1–21 (MVPPKLHVLFCLCGCLAVVYP). Ser273 (nucleophile) is an active-site residue. Active-site charge relay system residues include Asp296 and His351. N-linked (GlcNAc...) asparagine glycans are attached at residues Asn423 and Asn433.

Belongs to the AB hydrolase superfamily. Lipase family. In terms of processing, N-glycosylated. Macrophage-derived PLA2G7 carries sialylated complex-type N-glycans that hinder its binding to HDL particles. Plasma. Secreted by macrophages (at protein level).

It is found in the secreted. Its subcellular location is the extracellular space. It carries out the reaction a 1-O-alkyl-2-acetyl-sn-glycero-3-phosphocholine + H2O = a 1-O-alkyl-sn-glycero-3-phosphocholine + acetate + H(+). It catalyses the reaction 1-O-decyl-2-acetyl-sn-glycero-3-phosphocholine + H2O = 1-O-decyl-sn-glycero-3-phosphocholine + acetate + H(+). The catalysed reaction is 1-O-dodecyl-2-acetyl-sn-glycero-3-phosphocholine + H2O = 1-O-dodecyl-sn-glycero-3-phosphocholine + acetate + H(+). The enzyme catalyses 1-O-tetradecyl-2-acetyl-sn-glycero-3-phosphocholine + H2O = 1-O-tetradecyl-sn-glycero-3-phosphocholine + acetate + H(+). It carries out the reaction 1-O-hexadecyl-2-acetyl-sn-glycero-3-phosphocholine + H2O = 1-O-hexadecyl-sn-glycero-3-phosphocholine + acetate + H(+). It catalyses the reaction 1-O-octadecyl-2-acetyl-sn-glycero-3-phosphocholine + H2O = 1-O-octadecyl-sn-glycero-3-phosphocholine + acetate + H(+). The catalysed reaction is 1-hexadecanoyl-2-acetyl-sn-glycero-3-phosphocholine + H2O = 1-hexadecanoyl-sn-glycero-3-phosphocholine + acetate + H(+). The enzyme catalyses 1-hexadecanoyl-2-propionyl-sn-glycero-3-phosphocholine + H2O = propanoate + 1-hexadecanoyl-sn-glycero-3-phosphocholine + H(+). It carries out the reaction 1-hexadecanoyl-2-butanoyl-sn-glycero-3-phosphocholine + H2O = butanoate + 1-hexadecanoyl-sn-glycero-3-phosphocholine + H(+). It catalyses the reaction 1-hexadecanoyl-2-pentanoyl-sn-glycero-3-phosphocholine + H2O = pentanoate + 1-hexadecanoyl-sn-glycero-3-phosphocholine + H(+). The catalysed reaction is 1-hexadecanoyl-2-glutaroyl-sn-glycero-3-phosphocholine + H2O = glutarate + 1-hexadecanoyl-sn-glycero-3-phosphocholine + H(+). The enzyme catalyses 1-hexadecanoyl-2-(5-oxopentanoyl)-sn-glycero-3-phosphocholine + H2O = 5-oxopentanoate + 1-hexadecanoyl-sn-glycero-3-phosphocholine + H(+). It carries out the reaction 1-hexadecanoyl-2-(9-oxononanoyl)-sn-glycero-3-phosphocholine + H2O = 9-oxononanoate + 1-hexadecanoyl-sn-glycero-3-phosphocholine + H(+). It catalyses the reaction 1-hexadecanoyl-2-[9-hydroperoxy-(10E-octadecenoyl)]-sn-glycero-3-phosphocholine + H2O = 9-hydroperoxy-10E-octadecenoate + 1-hexadecanoyl-sn-glycero-3-phosphocholine + H(+). The catalysed reaction is 1-hexadecanoyl-2-(10-hydroperoxy-8E-octadecenoyl)-sn-glycero-3-phosphocholine + H2O = 10-hydroperoxy-(8E)-octadecenoate + 1-hexadecanoyl-sn-glycero-3-phosphocholine + H(+). Functionally, lipoprotein-associated calcium-independent phospholipase A2 involved in phospholipid catabolism during inflammatory and oxidative stress response. At the lipid-aqueous interface, hydrolyzes the ester bond of fatty acyl group attached at sn-2 position of phospholipids (phospholipase A2 activity). Specifically targets phospholipids with a short-chain fatty acyl group at sn-2 position. Can hydrolyze phospholipids with long fatty acyl chains, only if they carry oxidized functional groups. Hydrolyzes and inactivates platelet-activating factor (PAF, 1-O-alkyl-2-acetyl-sn-glycero-3-phosphocholine), a potent pro-inflammatory signaling lipid that acts through PTAFR on various innate immune cells. Hydrolyzes oxidatively truncated phospholipids carrying an aldehyde group at omega position, preventing their accumulation in low-density lipoprotein (LDL) particles and uncontrolled pro-inflammatory effects. As part of high-density lipoprotein (HDL) particles, can hydrolyze phospholipids having long-chain fatty acyl hydroperoxides at sn-2 position and protect against potential accumulation of these oxylipins in the vascular wall. Catalyzes the release from membrane phospholipids of F2-isoprostanes, lipid biomarkers of cellular oxidative damage. The protein is Platelet-activating factor acetylhydrolase (PLA2G7) of Homo sapiens (Human).